We begin with the raw amino-acid sequence, 443 residues long: Zinc finger protein 713 (443 aa).

The segment covering 1–10 has biased composition (polar residues); it reads MPSQNAVFSQ. 2 disordered regions span residues 1 to 23 and 99 to 118; these read MPSQNAVFSQEGNMEEEEMNDGS and DTHPDGENRPEIKKSTTSQN. The 71-residue stretch at 32-102 folds into the KRAB domain; the sequence is LTFQDVAVDF…ERDSLLDTHP (71 aa). Basic and acidic residues predominate over residues 99–112; it reads DTHPDGENRPEIKK. The C2H2-type 1; degenerate zinc finger occupies 255-280; that stretch reads HTAEKPSECGKAFSHTSSLSQPQMLL. C2H2-type zinc fingers lie at residues 286–308, 314–336, 342–364, 370–392, and 398–420; these read YKCDECGKRFSQRIHLIQHQRIH, FICNGCGKAFRQHSSFTQHLRIH, YKCNQCGKAFSRITSLTEHHRLH, YECGFCGKAFSQRTHLNQHERTH, and YKCNECGKAFSQSAHLNQHRKIH.

This sequence belongs to the krueppel C2H2-type zinc-finger protein family. In terms of tissue distribution, expressed in fetal and adult brain.

The protein resides in the nucleus. Its function is as follows. May be involved in transcriptional regulation. In Homo sapiens (Human), this protein is Zinc finger protein 713.